We begin with the raw amino-acid sequence, 875 residues long: Alanine--tRNA ligase (875 aa).

Residues His562, His566, Cys665, and His669 each coordinate Zn(2+).

Belongs to the class-II aminoacyl-tRNA synthetase family. Zn(2+) is required as a cofactor.

Its subcellular location is the cytoplasm. The enzyme catalyses tRNA(Ala) + L-alanine + ATP = L-alanyl-tRNA(Ala) + AMP + diphosphate. Catalyzes the attachment of alanine to tRNA(Ala) in a two-step reaction: alanine is first activated by ATP to form Ala-AMP and then transferred to the acceptor end of tRNA(Ala). Also edits incorrectly charged Ser-tRNA(Ala) and Gly-tRNA(Ala) via its editing domain. The polypeptide is Alanine--tRNA ligase (Saccharophagus degradans (strain 2-40 / ATCC 43961 / DSM 17024)).